Consider the following 205-residue polypeptide: MARSGRYKVPFRRRREGLTNYRKRRKLVISKKPRLVVRKTNKHIIAQIVVAKPIGDETVAGADTRILTKFGWRGDENNTSAAYLLGLVVGYKARMRGVEEAILDIGLHRPTPGARVFAVLKGALDAGLKIPHGEEVLPSDERIRGEHIAEYAAKLKEENPDAYKARFSRYLQRGLEPERLPDHFEEVRKAIQQHYENKLAKIVAK.

Belongs to the universal ribosomal protein uL18 family. Part of the 50S ribosomal subunit. Contacts the 5S and 23S rRNAs.

Its function is as follows. This is one of the proteins that bind and probably mediate the attachment of the 5S RNA into the large ribosomal subunit, where it forms part of the central protuberance. In Pyrobaculum arsenaticum (strain DSM 13514 / JCM 11321 / PZ6), this protein is Large ribosomal subunit protein uL18.